Here is a 211-residue protein sequence, read N- to C-terminus: Endonuclease V (211 aa).

Residues Asp37 and Asp102 each contribute to the Mg(2+) site.

Belongs to the endonuclease V family. It depends on Mg(2+) as a cofactor.

It localises to the cytoplasm. It carries out the reaction Endonucleolytic cleavage at apurinic or apyrimidinic sites to products with a 5'-phosphate.. Its function is as follows. DNA repair enzyme involved in the repair of deaminated bases. Selectively cleaves double-stranded DNA at the second phosphodiester bond 3' to a deoxyinosine leaving behind the intact lesion on the nicked DNA. The chain is Endonuclease V from Ignicoccus hospitalis (strain KIN4/I / DSM 18386 / JCM 14125).